A 196-amino-acid chain; its full sequence is MMIDIPDDRLVAGVDEVGRGPLVGDVVTAAVILDPANPIIGLNDSKKLSEKKRLALFDEIKEKALAWSVGRASPAEIDELNILHATMLAMQRAVAGLSIAPELVFIDGNRCPSLSMEARAVVKGDSLVAAISAASILAKVTRDAEMTELDSRHPEYGFARHKGYPTAEHLAILAERGPLPEYRKSFKPVRRALGIE.

Residues 9–196 enclose the RNase H type-2 domain; it reads RLVAGVDEVG…KPVRRALGIE (188 aa). Residues Asp15, Glu16, and Asp107 each coordinate a divalent metal cation.

The protein belongs to the RNase HII family. The cofactor is Mn(2+). Mg(2+) serves as cofactor.

The protein localises to the cytoplasm. It carries out the reaction Endonucleolytic cleavage to 5'-phosphomonoester.. Its function is as follows. Endonuclease that specifically degrades the RNA of RNA-DNA hybrids. The protein is Ribonuclease HII of Aeromonas hydrophila subsp. hydrophila (strain ATCC 7966 / DSM 30187 / BCRC 13018 / CCUG 14551 / JCM 1027 / KCTC 2358 / NCIMB 9240 / NCTC 8049).